The chain runs to 558 residues: Nucleoprotein (558 aa).

Residues 54–237 (MRKERRDDKD…ITEQQSSINI (184 aa)) form a binding site for the cap structure m7GTP region. Residues Asp-382 and Glu-384 each contribute to the Mn(2+) site. Glu-392, Cys-499, His-502, and Cys-518 together coordinate Zn(2+). Asp-522 is a Mn(2+) binding site.

This sequence belongs to the arenaviridae nucleocapsid protein family. Homomultimerizes to form the nucleocapsid. Binds to viral genomic RNA. Interacts with glycoprotein G2. Interacts with protein Z; this interaction probably directs the encapsidated genome to budding sites. Interacts with protein L; this interaction does not interfere with Z-L interaction. Interacts with host IKBKE (via Protein kinase domain); the interaction inhibits IKBKE kinase activity.

The protein resides in the virion. Its subcellular location is the host cytoplasm. Functionally, encapsidates the genome, protecting it from nucleases. The encapsidated genomic RNA is termed the nucleocapsid (NC). Serves as template for viral transcription and replication. The increased presence of protein N in host cell does not seem to trigger the switch from transcription to replication as observed in other negative strain RNA viruses. Through the interaction with host IKBKE, strongly inhibits the phosphorylation and nuclear translocation of host IRF3, a protein involved in interferon activation pathway, leading to the inhibition of interferon-beta and IRF3-dependent promoters activation. Also encodes a functional 3'-5' exoribonuclease that degrades preferentially dsRNA substrates and thereby participates in the suppression of interferon induction. This is Nucleoprotein from Lymphocytic choriomeningitis virus (strain WE) (LCMV).